An 806-amino-acid polypeptide reads, in one-letter code: Dimethyl sulfoxide reductase DmsA (806 aa).

Residues 1 to 35 constitute a signal peptide (tat-type signal); it reads MSNFNQISRRDFVKASSAGAALAVSNLTLPFNVMA. The 4Fe-4S Mo/W bis-MGD-type domain occupies 47-109; that stretch reads ERIVWSACTV…SMRRRVYNPD (63 aa). Cysteine 54, cysteine 58, cysteine 62, and cysteine 95 together coordinate [4Fe-4S] cluster. Mo-bis(molybdopterin guanine dinucleotide)-binding positions include 163–167, serine 196, 236–237, 262–263, 283–285, 378–379, arginine 382, asparagine 480, 504–505, histidine 693, 699–701, asparagine 780, and 796–797; these read LGGTM, ET, ID, GTD, WG, HST, and QH. The interval 786 to 806 is disordered; it reads RPSPLAKGNPQHSNLVQVERL. The span at 795–806 shows a compositional bias: polar residues; the sequence is PQHSNLVQVERL.

It belongs to the prokaryotic molybdopterin-containing oxidoreductase family. As to quaternary structure, heterotrimeric enzyme composed of a catalytic heterodimer (DmsAB) and a membrane anchor protein (DmsC). Requires [4Fe-4S] cluster as cofactor. Mo-bis(molybdopterin guanine dinucleotide) serves as cofactor. Post-translationally, predicted to be exported by the Tat system. The position of the signal peptide cleavage has not been experimentally proven.

It localises to the cell membrane. The enzyme catalyses dimethyl sulfide + a menaquinone + H2O = dimethyl sulfoxide + a menaquinol. Catalyzes the reduction of dimethyl sulfoxide (DMSO) to dimethyl sulfide (DMS). The terminal DMSO reductase can also use various sulfoxides and N-oxide compounds as terminal electron acceptor in addition to DMSO. The polypeptide is Dimethyl sulfoxide reductase DmsA (dmsA) (Haemophilus influenzae (strain ATCC 51907 / DSM 11121 / KW20 / Rd)).